Here is a 129-residue protein sequence, read N- to C-terminus: uncharacterized protein (129 aa).

Residues 1 to 20 (MIYPLFRICILGAFLLGSYA) form the signal peptide.

This is an uncharacterized protein from Saccharomyces cerevisiae (strain ATCC 204508 / S288c) (Baker's yeast).